Reading from the N-terminus, the 273-residue chain is Diaminopimelate epimerase (273 aa).

Asn11 and Asn60 together coordinate substrate. Residue Cys69 is the Proton donor of the active site. Substrate-binding positions include 70–71 (GN), Asn181, and 199–200 (ER). The active-site Proton acceptor is Cys209. 210 to 211 (GT) serves as a coordination point for substrate.

Belongs to the diaminopimelate epimerase family. Homodimer.

Its subcellular location is the cytoplasm. The catalysed reaction is (2S,6S)-2,6-diaminopimelate = meso-2,6-diaminopimelate. It functions in the pathway amino-acid biosynthesis; L-lysine biosynthesis via DAP pathway; DL-2,6-diaminopimelate from LL-2,6-diaminopimelate: step 1/1. Functionally, catalyzes the stereoinversion of LL-2,6-diaminopimelate (L,L-DAP) to meso-diaminopimelate (meso-DAP), a precursor of L-lysine and an essential component of the bacterial peptidoglycan. The chain is Diaminopimelate epimerase from Helicobacter pylori (strain Shi470).